The primary structure comprises 351 residues: Thiamine-phosphate synthase (351 aa).

Residues 1–129 form a unknown region; the sequence is MVEPYSQQKQ…GQACKQMRYR (129 aa). Residues 130-351 form a thiamine-phosphate synthase region; sequence VYSLETNLMG…SQLNRIKPES (222 aa). Residues 177-181 and Asn209 each bind 4-amino-2-methyl-5-(diphosphooxymethyl)pyrimidine; that span reads QYRDK. Mg(2+)-binding residues include Asp210 and Asp229. Position 248 (Ser248) interacts with 4-amino-2-methyl-5-(diphosphooxymethyl)pyrimidine. 274-276 is a 2-[(2R,5Z)-2-carboxy-4-methylthiazol-5(2H)-ylidene]ethyl phosphate binding site; sequence TPT. Position 277 (Lys277) interacts with 4-amino-2-methyl-5-(diphosphooxymethyl)pyrimidine. Gly304 contacts 2-[(2R,5Z)-2-carboxy-4-methylthiazol-5(2H)-ylidene]ethyl phosphate.

This sequence belongs to the thiamine-phosphate synthase family. It depends on Mg(2+) as a cofactor.

The catalysed reaction is 2-[(2R,5Z)-2-carboxy-4-methylthiazol-5(2H)-ylidene]ethyl phosphate + 4-amino-2-methyl-5-(diphosphooxymethyl)pyrimidine + 2 H(+) = thiamine phosphate + CO2 + diphosphate. It carries out the reaction 2-(2-carboxy-4-methylthiazol-5-yl)ethyl phosphate + 4-amino-2-methyl-5-(diphosphooxymethyl)pyrimidine + 2 H(+) = thiamine phosphate + CO2 + diphosphate. The enzyme catalyses 4-methyl-5-(2-phosphooxyethyl)-thiazole + 4-amino-2-methyl-5-(diphosphooxymethyl)pyrimidine + H(+) = thiamine phosphate + diphosphate. It participates in cofactor biosynthesis; thiamine diphosphate biosynthesis; thiamine phosphate from 4-amino-2-methyl-5-diphosphomethylpyrimidine and 4-methyl-5-(2-phosphoethyl)-thiazole: step 1/1. Functionally, condenses 4-methyl-5-(beta-hydroxyethyl)thiazole monophosphate (THZ-P) and 2-methyl-4-amino-5-hydroxymethyl pyrimidine pyrophosphate (HMP-PP) to form thiamine monophosphate (TMP). This is Thiamine-phosphate synthase from Nostoc sp. (strain PCC 7120 / SAG 25.82 / UTEX 2576).